The primary structure comprises 319 residues: 3-oxoacyl-[acyl-carrier-protein] reductase, chloroplastic (319 aa).

Residues 1 to 57 (MAAAVAAPRLISLKAVAKLGFREISQIRQLAPLHSAIPHFGMLRCRSRQPFSTSVVK) constitute a chloroplast transit peptide. An N-acetylalanine modification is found at A58. 81–105 (ITGASRGIGKAIALALGKAGCKVLV) contributes to the NADP(+) binding site. Residue S213 participates in substrate binding. Catalysis depends on Y226, which acts as the Proton acceptor.

It belongs to the short-chain dehydrogenases/reductases (SDR) family. As to quaternary structure, homotetramer.

Its subcellular location is the plastid. The protein resides in the chloroplast. The catalysed reaction is a (3R)-hydroxyacyl-[ACP] + NADP(+) = a 3-oxoacyl-[ACP] + NADPH + H(+). Its pathway is lipid metabolism; fatty acid biosynthesis. This is 3-oxoacyl-[acyl-carrier-protein] reductase, chloroplastic from Arabidopsis thaliana (Mouse-ear cress).